The primary structure comprises 1482 residues: Chromosome partition protein MukB (1482 aa).

34-41 (GGNGAGKS) is a binding site for ATP. 6 coiled-coil regions span residues 337-418 (LNLV…QYQQ), 444-472 (LDTY…QTAH), 509-601 (RHLA…TSHA), 781-805 (AARE…ATLS), 835-1116 (EAEI…AKAG), and 1210-1265 (EAIE…LQSV). The interval 666-783 (PGGAEDARLN…SVPLFGRAAR (118 aa)) is flexible hinge. The segment at 1049-1077 (ADAGAEERARQRRDELHTRLSNNRSRRNQ) is disordered. Positions 1051-1066 (AGAEERARQRRDELHT) are enriched in basic and acidic residues.

The protein belongs to the SMC family. MukB subfamily. Homodimerization via its hinge domain. Binds to DNA via its C-terminal region. Interacts, and probably forms a ternary complex, with MukE and MukF via its C-terminal region. The complex formation is stimulated by calcium or magnesium. Interacts with tubulin-related protein FtsZ.

The protein resides in the cytoplasm. It is found in the nucleoid. Functionally, plays a central role in chromosome condensation, segregation and cell cycle progression. Functions as a homodimer, which is essential for chromosome partition. Involved in negative DNA supercoiling in vivo, and by this means organize and compact chromosomes. May achieve or facilitate chromosome segregation by condensation DNA from both sides of a centrally located replisome during cell division. This chain is Chromosome partition protein MukB, found in Cronobacter sakazakii (strain ATCC BAA-894) (Enterobacter sakazakii).